The following is a 157-amino-acid chain: Crossover junction endodeoxyribonuclease RuvC (157 aa).

Active-site residues include aspartate 7, glutamate 66, and aspartate 139. Mg(2+) is bound by residues aspartate 7, glutamate 66, and aspartate 139.

This sequence belongs to the RuvC family. As to quaternary structure, homodimer which binds Holliday junction (HJ) DNA. The HJ becomes 2-fold symmetrical on binding to RuvC with unstacked arms; it has a different conformation from HJ DNA in complex with RuvA. In the full resolvosome a probable DNA-RuvA(4)-RuvB(12)-RuvC(2) complex forms which resolves the HJ. It depends on Mg(2+) as a cofactor.

The protein resides in the cytoplasm. The catalysed reaction is Endonucleolytic cleavage at a junction such as a reciprocal single-stranded crossover between two homologous DNA duplexes (Holliday junction).. Its function is as follows. The RuvA-RuvB-RuvC complex processes Holliday junction (HJ) DNA during genetic recombination and DNA repair. Endonuclease that resolves HJ intermediates. Cleaves cruciform DNA by making single-stranded nicks across the HJ at symmetrical positions within the homologous arms, yielding a 5'-phosphate and a 3'-hydroxyl group; requires a central core of homology in the junction. The consensus cleavage sequence is 5'-(A/T)TT(C/G)-3'. Cleavage occurs on the 3'-side of the TT dinucleotide at the point of strand exchange. HJ branch migration catalyzed by RuvA-RuvB allows RuvC to scan DNA until it finds its consensus sequence, where it cleaves and resolves the cruciform DNA. In Helicobacter pylori (strain J99 / ATCC 700824) (Campylobacter pylori J99), this protein is Crossover junction endodeoxyribonuclease RuvC.